A 1414-amino-acid polypeptide reads, in one-letter code: DNA-directed RNA polymerase subunit beta' (1414 aa).

Zn(2+)-binding residues include cysteine 70, cysteine 72, cysteine 85, and cysteine 88. Residues aspartate 460, aspartate 462, and aspartate 464 each contribute to the Mg(2+) site. The Zn(2+) site is built by cysteine 815, cysteine 889, cysteine 896, and cysteine 899. Residues 1395–1414 (EAEAQFADVSSTPDSDTDAS) form a disordered region.

It belongs to the RNA polymerase beta' chain family. The RNAP catalytic core consists of 2 alpha, 1 beta, 1 beta' and 1 omega subunit. When a sigma factor is associated with the core the holoenzyme is formed, which can initiate transcription. Mg(2+) serves as cofactor. Requires Zn(2+) as cofactor.

It carries out the reaction RNA(n) + a ribonucleoside 5'-triphosphate = RNA(n+1) + diphosphate. In terms of biological role, DNA-dependent RNA polymerase catalyzes the transcription of DNA into RNA using the four ribonucleoside triphosphates as substrates. In Janthinobacterium sp. (strain Marseille) (Minibacterium massiliensis), this protein is DNA-directed RNA polymerase subunit beta'.